Here is a 291-residue protein sequence, read N- to C-terminus: Transcription antitermination protein NusB (291 aa).

It belongs to the NusB family.

Involved in transcription antitermination. Required for transcription of ribosomal RNA (rRNA) genes. Binds specifically to the boxA antiterminator sequence of the ribosomal RNA (rrn) operons. This chain is Transcription antitermination protein NusB, found in Synechococcus sp. (strain JA-2-3B'a(2-13)) (Cyanobacteria bacterium Yellowstone B-Prime).